The primary structure comprises 228 residues: Probable septum site-determining protein MinC (228 aa).

Belongs to the MinC family. As to quaternary structure, interacts with MinD and FtsZ.

Its function is as follows. Cell division inhibitor that blocks the formation of polar Z ring septums. Rapidly oscillates between the poles of the cell to destabilize FtsZ filaments that have formed before they mature into polar Z rings. Prevents FtsZ polymerization. This chain is Probable septum site-determining protein MinC, found in Bacillus mycoides (strain KBAB4) (Bacillus weihenstephanensis).